Consider the following 108-residue polypeptide: Large ribosomal subunit protein uL11 (108 aa).

It belongs to the universal ribosomal protein uL11 family. In terms of assembly, part of the ribosomal stalk of the 50S ribosomal subunit. Interacts with L10 and the large rRNA to form the base of the stalk. L10 forms an elongated spine to which L12 dimers bind in a sequential fashion forming a multimeric L10(L12)X complex.

In terms of biological role, forms part of the ribosomal stalk which helps the ribosome interact with GTP-bound translation factors. The protein is Large ribosomal subunit protein uL11 (rpl11) of Aeropyrum pernix (strain ATCC 700893 / DSM 11879 / JCM 9820 / NBRC 100138 / K1).